We begin with the raw amino-acid sequence, 131 residues long: uncharacterized protein (131 aa).

An N-terminal signal peptide occupies residues 1 to 16 (MDVLFVAIFAVPLILG).

It localises to the secreted. This is an uncharacterized protein from Homo sapiens (Human).